A 337-amino-acid chain; its full sequence is Mitochondrial amidoxime-reducing component 1 (337 aa).

G2 carries the N-myristoyl glycine lipid modification. The Mitochondrial matrix segment spans residues 2 to 20; sequence GAAGSSALARFVLLAQSRP. The helical; Signal-anchor for type II membrane protein transmembrane segment at 21 to 40 threads the bilayer; it reads GWLGVAALGLTAVALGAVAW. Topologically, residues 41 to 337 are cytoplasmic; the sequence is RRAWPTRRRR…VGDPVYLLGQ (297 aa). Mo-molybdopterin is bound by residues K67, S68, and R92. Residues 93–183 are MOSC N-terminal region; the sequence is FWLVINQEGN…KSQPYRLVHF (91 aa). Residues 187-335 form the MOSC domain; the sequence is MRPRRPHQIA…IKVGDPVYLL (149 aa). Mo-molybdopterin-binding residues include T210, S211, R238, N240, S271, R272, C273, and Y317.

As to quaternary structure, component of a complex composed of cytochrome b5, NADH-cytochrome b5 reductase and MTARC1. It depends on Mo-molybdopterin as a cofactor.

It is found in the mitochondrion outer membrane. The protein localises to the membrane. It catalyses the reaction N(omega)-hydroxy-L-arginine + 2 Fe(II)-[cytochrome b5] + 2 H(+) = L-arginine + 2 Fe(III)-[cytochrome b5] + H2O. Its function is as follows. Catalyzes the reduction of N-oxygenated molecules, acting as a counterpart of cytochrome P450 and flavin-containing monooxygenases in metabolic cycles. As a component of prodrug-converting system, reduces a multitude of N-hydroxylated prodrugs particularly amidoximes, leading to increased drug bioavailability. May be involved in mitochondrial N(omega)-hydroxy-L-arginine (NOHA) reduction, regulating endogenous nitric oxide levels and biosynthesis. Postulated to cleave the N-OH bond of N-hydroxylated substrates in concert with electron transfer from NADH to cytochrome b5 reductase then to cytochrome b5, the ultimate electron donor that primes the active site for substrate reduction. In Homo sapiens (Human), this protein is Mitochondrial amidoxime-reducing component 1.